A 231-amino-acid chain; its full sequence is Probable methylthioribulose-1-phosphate dehydratase (231 aa).

Cys82 contributes to the substrate binding site. Zn(2+) contacts are provided by His100 and His102. Glu123 serves as the catalytic Proton donor/acceptor. A Zn(2+)-binding site is contributed by His181.

This sequence belongs to the aldolase class II family. MtnB subfamily. It depends on Zn(2+) as a cofactor.

It localises to the cytoplasm. It catalyses the reaction 5-(methylsulfanyl)-D-ribulose 1-phosphate = 5-methylsulfanyl-2,3-dioxopentyl phosphate + H2O. It functions in the pathway amino-acid biosynthesis; L-methionine biosynthesis via salvage pathway; L-methionine from S-methyl-5-thio-alpha-D-ribose 1-phosphate: step 2/6. Functionally, catalyzes the dehydration of methylthioribulose-1-phosphate (MTRu-1-P) into 2,3-diketo-5-methylthiopentyl-1-phosphate (DK-MTP-1-P). The protein is Probable methylthioribulose-1-phosphate dehydratase of Dictyostelium discoideum (Social amoeba).